The primary structure comprises 288 residues: ATP synthase gamma chain (288 aa).

Belongs to the ATPase gamma chain family. F-type ATPases have 2 components, CF(1) - the catalytic core - and CF(0) - the membrane proton channel. CF(1) has five subunits: alpha(3), beta(3), gamma(1), delta(1), epsilon(1). CF(0) has three main subunits: a, b and c.

It is found in the cell inner membrane. Functionally, produces ATP from ADP in the presence of a proton gradient across the membrane. The gamma chain is believed to be important in regulating ATPase activity and the flow of protons through the CF(0) complex. This chain is ATP synthase gamma chain, found in Chromobacterium violaceum (strain ATCC 12472 / DSM 30191 / JCM 1249 / CCUG 213 / NBRC 12614 / NCIMB 9131 / NCTC 9757 / MK).